Consider the following 293-residue polypeptide: Small ribosomal subunit biogenesis GTPase RsgA (293 aa).

The 161-residue stretch at 63–223 (KNELVRPPIA…VADTPGFSSL (161 aa)) folds into the CP-type G domain. GTP is bound by residues 112–115 (SKMD) and 166–174 (GQSGVGKSS). Zn(2+) contacts are provided by Cys247, Cys252, His254, and Cys260.

The protein belongs to the TRAFAC class YlqF/YawG GTPase family. RsgA subfamily. In terms of assembly, monomer. Associates with 30S ribosomal subunit, binds 16S rRNA. Zn(2+) is required as a cofactor.

It localises to the cytoplasm. Its function is as follows. One of several proteins that assist in the late maturation steps of the functional core of the 30S ribosomal subunit. Helps release RbfA from mature subunits. May play a role in the assembly of ribosomal proteins into the subunit. Circularly permuted GTPase that catalyzes slow GTP hydrolysis, GTPase activity is stimulated by the 30S ribosomal subunit. In Bacillus cereus (strain ATCC 10987 / NRS 248), this protein is Small ribosomal subunit biogenesis GTPase RsgA.